The primary structure comprises 289 residues: Serine/threonine-protein phosphatase Pgam5, mitochondrial (289 aa).

Residues 7–23 form a helical membrane-spanning segment; sequence FACGTGAGLLTFYLTKL.

The protein belongs to the phosphoglycerate mutase family. BPG-dependent PGAM subfamily. As to quaternary structure, interacts with Pk92B/ASK1.

The protein localises to the mitochondrion outer membrane. The catalysed reaction is O-phospho-L-seryl-[protein] + H2O = L-seryl-[protein] + phosphate. The enzyme catalyses O-phospho-L-threonyl-[protein] + H2O = L-threonyl-[protein] + phosphate. Functionally, displays phosphatase activity for serine/threonine residues, and dephosphorylates and activates Pk92B kinase. Has apparently no phosphoglycerate mutase activity. The polypeptide is Serine/threonine-protein phosphatase Pgam5, mitochondrial (Pgam5) (Drosophila pseudoobscura pseudoobscura (Fruit fly)).